Consider the following 132-residue polypeptide: Small ribosomal subunit protein uS8 (132 aa).

It belongs to the universal ribosomal protein uS8 family. Part of the 30S ribosomal subunit. Contacts proteins S5 and S12.

One of the primary rRNA binding proteins, it binds directly to 16S rRNA central domain where it helps coordinate assembly of the platform of the 30S subunit. In Bacillus licheniformis (strain ATCC 14580 / DSM 13 / JCM 2505 / CCUG 7422 / NBRC 12200 / NCIMB 9375 / NCTC 10341 / NRRL NRS-1264 / Gibson 46), this protein is Small ribosomal subunit protein uS8.